The chain runs to 358 residues: Protein UL24 (358 aa).

The protein belongs to the herpesviridae US22 family.

The protein resides in the virion tegument. In Homo sapiens (Human), this protein is Protein UL24 (UL24).